Consider the following 344-residue polypeptide: Arginine N-succinyltransferase (344 aa).

Leucine 125 is a binding site for succinyl-CoA. The active-site Proton donor is histidine 229.

Belongs to the arginine N-succinyltransferase family.

The catalysed reaction is succinyl-CoA + L-arginine = N(2)-succinyl-L-arginine + CoA + H(+). Its pathway is amino-acid degradation; L-arginine degradation via AST pathway; L-glutamate and succinate from L-arginine: step 1/5. Its function is as follows. Catalyzes the transfer of succinyl-CoA to arginine to produce N(2)-succinylarginine. This Escherichia coli O157:H7 protein is Arginine N-succinyltransferase.